Here is a 187-residue protein sequence, read N- to C-terminus: Probable DNA-directed RNA polymerase subunit delta (187 aa).

The region spanning 14–81 (LSMIEVAHAL…GNNVWALRSW (68 aa)) is the HTH HARE-type domain. A disordered region spans residues 96–187 (EIEDEEEEKP…EDDSDDTDED (92 aa)). Composition is skewed to acidic residues over residues 117–149 (IEDE…EDKD) and 157–187 (ELAE…TDED).

It belongs to the RpoE family. As to quaternary structure, RNAP is composed of a core of 2 alpha, a beta and a beta' subunits. The core is associated with a delta subunit and one of several sigma factors.

Its function is as follows. Participates in both the initiation and recycling phases of transcription. In the presence of the delta subunit, RNAP displays an increased specificity of transcription, a decreased affinity for nucleic acids, and an increased efficiency of RNA synthesis because of enhanced recycling. The sequence is that of Probable DNA-directed RNA polymerase subunit delta from Lactococcus lactis subsp. cremoris (strain SK11).